Consider the following 250-residue polypeptide: Bacteriorhodopsin-II (250 aa).

Transmembrane regions (helical) follow at residues 14 to 34 (EGIW…YFMA), 49 to 69 (VITI…FFGF), 89 to 109 (YADW…LAGA), 114 to 134 (MASL…ATLM), 142 to 162 (AFWT…VVVV), 183 to 203 (IILV…EGLG), and 210 to 230 (ETLL…FILL). N6-(retinylidene)lysine is present on lysine 222.

Belongs to the archaeal/bacterial/fungal opsin family. The covalent binding of retinal to the apoprotein, bacterioopsin, generates bacteriorhodopsin.

The protein localises to the membrane. Functionally, light-driven proton pump. In Haloarcula marismortui (strain ATCC 43049 / DSM 3752 / JCM 8966 / VKM B-1809) (Halobacterium marismortui), this protein is Bacteriorhodopsin-II (xop1).